The chain runs to 140 residues: Nucleoside diphosphate kinase (140 aa).

Positions 11, 59, 87, 93, 104, and 114 each coordinate ATP. The active-site Pros-phosphohistidine intermediate is the H117.

It belongs to the NDK family. As to quaternary structure, homotetramer. Mg(2+) is required as a cofactor.

Its subcellular location is the cytoplasm. The enzyme catalyses a 2'-deoxyribonucleoside 5'-diphosphate + ATP = a 2'-deoxyribonucleoside 5'-triphosphate + ADP. The catalysed reaction is a ribonucleoside 5'-diphosphate + ATP = a ribonucleoside 5'-triphosphate + ADP. Functionally, major role in the synthesis of nucleoside triphosphates other than ATP. The ATP gamma phosphate is transferred to the NDP beta phosphate via a ping-pong mechanism, using a phosphorylated active-site intermediate. The sequence is that of Nucleoside diphosphate kinase from Rickettsia peacockii (strain Rustic).